Consider the following 78-residue polypeptide: Acyl carrier protein (78 aa).

The region spanning 2-77 (STIEERVKKI…EAIDYINAHA (76 aa)) is the Carrier domain. Ser-37 is modified (O-(pantetheine 4'-phosphoryl)serine).

The protein belongs to the acyl carrier protein (ACP) family. Post-translationally, 4'-phosphopantetheine is transferred from CoA to a specific serine of apo-ACP by AcpS. This modification is essential for activity because fatty acids are bound in thioester linkage to the sulfhydryl of the prosthetic group.

Its subcellular location is the cytoplasm. Its pathway is lipid metabolism; fatty acid biosynthesis. Its function is as follows. Carrier of the growing fatty acid chain in fatty acid biosynthesis. The sequence is that of Acyl carrier protein from Stutzerimonas stutzeri (strain A1501) (Pseudomonas stutzeri).